A 546-amino-acid polypeptide reads, in one-letter code: Putative inactive G-type lectin S-receptor-like serine/threonine-protein kinase SRK (546 aa).

The first 31 residues, 1–31 (MRGELPNKHHSYTFFVFLFFFLILFPDLSIS), serve as a signal peptide directing secretion. Residues 32–441 (VNTLSATESL…FGERRTIRGK (410 aa)) lie on the Extracellular side of the membrane. The Bulb-type lectin domain maps to 34-154 (TLSATESLTI…KINESDEFLW (121 aa)). N-linked (GlcNAc...) asparagine glycans are attached at residues asparagine 46, asparagine 120, asparagine 147, and asparagine 243. Residues 293-329 (PKDTCDLYGICGPYAYCDMSTSPTCNCIKGFQPLSPQ) enclose the EGF-like; atypical domain. Intrachain disulfides connect cysteine 297–cysteine 309, cysteine 303–cysteine 317, cysteine 378–cysteine 403, and cysteine 382–cysteine 388. In terms of domain architecture, PAN spans 348–428 (CGEDRFFRLM…DGQDLFVRLA (81 aa)). Residue asparagine 387 is glycosylated (N-linked (GlcNAc...) asparagine). A helical membrane pass occupies residues 442 to 462 (IIGLIIGISLMLVLSFIIYCF). Residues 463–546 (WKKKQKRARA…IVYKGRLLDG (84 aa)) are Cytoplasmic-facing. In terms of domain architecture, Protein kinase spans 524-546 (FSDSNILGRGGFGIVYKGRLLDG). 530–538 (LGRGGFGIV) provides a ligand contact to ATP.

This sequence belongs to the protein kinase superfamily. Ser/Thr protein kinase family.

Its subcellular location is the cell membrane. Truncated and inactivated form of SRK, the female specificity determinant of self-incompatibility when active. Most A.thaliana cultivars contain such an inactive form and thus, are self-fertiles. This Arabidopsis thaliana (Mouse-ear cress) protein is Putative inactive G-type lectin S-receptor-like serine/threonine-protein kinase SRK (PSEUDOSRKA).